The sequence spans 59 residues: Cytochrome c oxidase subunit 7 (59 aa).

The Mitochondrial matrix segment spans residues 1-24 (MKNTIVQQQRFLQSIHKPTYLQRP). A helical transmembrane segment spans residues 25–47 (GSFALVYPYYAVMAGLGLYSLYA). The Mitochondrial intermembrane portion of the chain corresponds to 48 to 59 (SGRVIFGKKDAF).

The protein belongs to the cytochrome c oxidase subunit 7 family. As to quaternary structure, component of the cytochrome c oxidase (complex IV, CIV), a multisubunit enzyme composed of a catalytic core of 3 subunits and several supernumerary subunits. The complex exists as a monomer or a dimer and forms supercomplexes (SCs) in the inner mitochondrial membrane with ubiquinol-cytochrome c oxidoreductase (cytochrome b-c1 complex, complex III, CIII).

The protein resides in the mitochondrion inner membrane. Its pathway is energy metabolism; oxidative phosphorylation. In terms of biological role, component of the cytochrome c oxidase, the last enzyme in the mitochondrial electron transport chain which drives oxidative phosphorylation. The respiratory chain contains 3 multisubunit complexes succinate dehydrogenase (complex II, CII), ubiquinol-cytochrome c oxidoreductase (cytochrome b-c1 complex, complex III, CIII) and cytochrome c oxidase (complex IV, CIV), that cooperate to transfer electrons derived from NADH and succinate to molecular oxygen, creating an electrochemical gradient over the inner membrane that drives transmembrane transport and the ATP synthase. Cytochrome c oxidase is the component of the respiratory chain that catalyzes the reduction of oxygen to water. Electrons originating from reduced cytochrome c in the intermembrane space (IMS) are transferred via the dinuclear copper A center (CU(A)) of subunit 2 and heme A of subunit 1 to the active site in subunit 1, a binuclear center (BNC) formed by heme A3 and copper B (CU(B)). The BNC reduces molecular oxygen to 2 water molecules using 4 electrons from cytochrome c in the IMS and 4 protons from the mitochondrial matrix. In Schizosaccharomyces pombe (strain 972 / ATCC 24843) (Fission yeast), this protein is Cytochrome c oxidase subunit 7 (cox7).